A 959-amino-acid chain; its full sequence is Isoleucine--tRNA ligase (959 aa).

Positions 60-70 (PYANGSLHIGH) match the 'HIGH' region motif. Glu-571 contacts L-isoleucyl-5'-AMP. Positions 612 to 616 (KMSKS) match the 'KMSKS' region motif. Position 615 (Lys-615) interacts with ATP. Cys-928, Cys-931, Cys-948, and Cys-951 together coordinate Zn(2+).

It belongs to the class-I aminoacyl-tRNA synthetase family. IleS type 1 subfamily. In terms of assembly, monomer. Zn(2+) is required as a cofactor.

Its subcellular location is the cytoplasm. It catalyses the reaction tRNA(Ile) + L-isoleucine + ATP = L-isoleucyl-tRNA(Ile) + AMP + diphosphate. In terms of biological role, catalyzes the attachment of isoleucine to tRNA(Ile). As IleRS can inadvertently accommodate and process structurally similar amino acids such as valine, to avoid such errors it has two additional distinct tRNA(Ile)-dependent editing activities. One activity is designated as 'pretransfer' editing and involves the hydrolysis of activated Val-AMP. The other activity is designated 'posttransfer' editing and involves deacylation of mischarged Val-tRNA(Ile). This chain is Isoleucine--tRNA ligase, found in Nostoc punctiforme (strain ATCC 29133 / PCC 73102).